We begin with the raw amino-acid sequence, 237 residues long: 2,3-bisphosphoglycerate-dependent phosphoglycerate mutase (237 aa).

Substrate-binding positions include 10–17 (RHGESKWN), 23–24 (TG), Arg62, 89–92 (ERHY), Lys100, 116–117 (RR), and 185–186 (GN). His11 (tele-phosphohistidine intermediate) is an active-site residue. Glu89 (proton donor/acceptor) is an active-site residue.

The protein belongs to the phosphoglycerate mutase family. BPG-dependent PGAM subfamily. Homodimer.

The enzyme catalyses (2R)-2-phosphoglycerate = (2R)-3-phosphoglycerate. It functions in the pathway carbohydrate degradation; glycolysis; pyruvate from D-glyceraldehyde 3-phosphate: step 3/5. Catalyzes the interconversion of 2-phosphoglycerate and 3-phosphoglycerate. The polypeptide is 2,3-bisphosphoglycerate-dependent phosphoglycerate mutase (Baumannia cicadellinicola subsp. Homalodisca coagulata).